Consider the following 388-residue polypeptide: MLVLVINSGSSSLKYQLRELADDGADGPRPVLAKGLVERIGVPGSDVPDHAAALERVEAEVFRVIGDRPIDAAGHRVVHGGERFTAAALVTNEVIRAIERLAPLAPLHNPAAAQGLRAMTERYPDMPQVVVFDTSFHQTMPREAWQYALPESVYREHGIRRYGFHGTSHDLVAGMAARHLGVAREEFSGIVLHLGNGASATAIRDGASVDTSMGFTPLAGLVMGTRTGDLDPSVVTHLMRTQGRSAEEMDTLMNKESGLLGLAGHADMRQVVEAADAGDRRARTALDVASYRLAKYVGGYHVAVGGAQAIVFTAGIGENSAPFRARVVQRLGALGVELDAAANEAGLSGAGDDGVAVISAPGSAIPVLVIPTDEEQAIARLTWELTRG.

Residue N7 coordinates Mg(2+). K14 contacts ATP. Residue R76 participates in substrate binding. D133 serves as the catalytic Proton donor/acceptor. ATP is bound by residues 193-197, 267-269, and 315-319; these read HLGNG, DMR, and GIGEN. E374 is a Mg(2+) binding site.

The protein belongs to the acetokinase family. As to quaternary structure, homodimer. Requires Mg(2+) as cofactor. Mn(2+) serves as cofactor.

It localises to the cytoplasm. The enzyme catalyses acetate + ATP = acetyl phosphate + ADP. Its pathway is metabolic intermediate biosynthesis; acetyl-CoA biosynthesis; acetyl-CoA from acetate: step 1/2. In terms of biological role, catalyzes the formation of acetyl phosphate from acetate and ATP. Can also catalyze the reverse reaction. The sequence is that of Acetate kinase from Micrococcus luteus (strain ATCC 4698 / DSM 20030 / JCM 1464 / CCM 169 / CCUG 5858 / IAM 1056 / NBRC 3333 / NCIMB 9278 / NCTC 2665 / VKM Ac-2230) (Micrococcus lysodeikticus).